A 535-amino-acid chain; its full sequence is Bifunctional purine biosynthesis protein PurH (535 aa).

Residues 6-151 (TRLPIRRALI…KNHKDVAIVV (146 aa)) enclose the MGS-like domain.

Belongs to the PurH family.

The enzyme catalyses (6R)-10-formyltetrahydrofolate + 5-amino-1-(5-phospho-beta-D-ribosyl)imidazole-4-carboxamide = 5-formamido-1-(5-phospho-D-ribosyl)imidazole-4-carboxamide + (6S)-5,6,7,8-tetrahydrofolate. It catalyses the reaction IMP + H2O = 5-formamido-1-(5-phospho-D-ribosyl)imidazole-4-carboxamide. Its pathway is purine metabolism; IMP biosynthesis via de novo pathway; 5-formamido-1-(5-phospho-D-ribosyl)imidazole-4-carboxamide from 5-amino-1-(5-phospho-D-ribosyl)imidazole-4-carboxamide (10-formyl THF route): step 1/1. It functions in the pathway purine metabolism; IMP biosynthesis via de novo pathway; IMP from 5-formamido-1-(5-phospho-D-ribosyl)imidazole-4-carboxamide: step 1/1. The sequence is that of Bifunctional purine biosynthesis protein PurH from Pseudomonas entomophila (strain L48).